A 754-amino-acid polypeptide reads, in one-letter code: MSPEPVPPPPPPQCPGCDRAEPIAQRLEEGDEAFRAGDYEMAAELFRSMLAGLAQPDRGLCLRLGDALARAGRLPEALGAFRGAARLGALRPEELEELAGGLVRAVGLRDRPLSAENPGGEPEAPGEGGPAPEPRAPRDLLGCPRCRRLLHKPVTLPCGLTVCKRCVEPGPARPQVRRVNVVLSGLLEKCFPAECRLRRLAGQARSLQRQQQPEAALLRCDQALELAPDDNSLLLLRAELYLTMKNYEQALQDASAACQNEPLLIKGHQVKAQALSGLGRSKEVLKEFLYCLALNPECNSVKKEAQKVMCEVLFSATANVHENLTSSIQSRLKAQGHSHMNAQALLEEGDAGSSENSSEKSDMLGNTNSSVLYFILGLHFEEDKKALESILPTAPSAGLKRQFPDDVEDAPDLNAPGKIPKKDLSLQRSPNSETEESQGLSLDVTDFECALCMRLLFEPVTTPCGHTFCLKCLERCLDHAPHCPLCKDKLSELLASRNFNITVLAEELIFRYLPDELSDRKRIYDEEMSELSNLTRDVPIFVCAMAFPTVPCPLHVFEPRYRLMIRRCMETGTKRFGMCLSAEHAGLSEYGCMLEIKDVRTFPDGSSVVDAIGISRFRVLSHRHRDGYNTADIEYLEDEKVEGPEYEELAALHDSVHQQSVSWFASLQDRMKEQILSHFGVMPDREPEPQSNPSGPAWSWWILAVLPLERKAQLAILGMTSLKERLLAIRRILVIITRKMNSRQELANARERNN.

TPR repeat units lie at residues 23 to 58 (IAQR…QPDR) and 59 to 91 (GLCL…GALR). The disordered stretch occupies residues 112 to 136 (PLSAENPGGEPEAPGEGGPAPEPRA). Positions 115-125 (AENPGGEPEAP) are enriched in low complexity. TPR repeat units lie at residues 197 to 230 (LRRL…APDD), 231 to 264 (NSLL…EPLL), and 266 to 298 (KGHQ…NPEC). The tract at residues 398–439 (GLKRQFPDDVEDAPDLNAPGKIPKKDLSLQRSPNSETEESQG) is disordered. Residues 426–439 (LQRSPNSETEESQG) are compositionally biased toward polar residues. The stretch at 447-483 (FECALCMRLLFEPVTTPCGHTFCLKCLERCLDHAPHC) is one TPR 6 repeat. The segment at 449 to 487 (CALCMRLLFEPVTTPCGHTFCLKCLERCLDHAPHCPLCK) adopts an RING-type zinc-finger fold. The 210-residue stretch at 528 to 737 (MSELSNLTRD…AIRRILVIIT (210 aa)) folds into the Lon N-terminal domain.

This Homo sapiens (Human) protein is LON peptidase N-terminal domain and RING finger protein 2 (LONRF2).